A 273-amino-acid polypeptide reads, in one-letter code: Shikimate dehydrogenase (NADP(+)) (273 aa).

Residues 14–16 and T59 each bind shikimate; that span reads SLS. The active-site Proton acceptor is the K63. 2 residues coordinate shikimate: N84 and D99. NADP(+) is bound by residues 122–126 and M212; that span reads GAGGA. Position 214 (Y214) interacts with shikimate. An NADP(+)-binding site is contributed by G235.

The protein belongs to the shikimate dehydrogenase family. Homodimer.

It catalyses the reaction shikimate + NADP(+) = 3-dehydroshikimate + NADPH + H(+). It participates in metabolic intermediate biosynthesis; chorismate biosynthesis; chorismate from D-erythrose 4-phosphate and phosphoenolpyruvate: step 4/7. Its function is as follows. Involved in the biosynthesis of the chorismate, which leads to the biosynthesis of aromatic amino acids. Catalyzes the reversible NADPH linked reduction of 3-dehydroshikimate (DHSA) to yield shikimate (SA). In Aeropyrum pernix (strain ATCC 700893 / DSM 11879 / JCM 9820 / NBRC 100138 / K1), this protein is Shikimate dehydrogenase (NADP(+)).